The following is a 287-amino-acid chain: ATP synthase gamma chain (287 aa).

The protein belongs to the ATPase gamma chain family. In terms of assembly, F-type ATPases have 2 components, CF(1) - the catalytic core - and CF(0) - the membrane proton channel. CF(1) has five subunits: alpha(3), beta(3), gamma(1), delta(1), epsilon(1). CF(0) has three main subunits: a, b and c.

The protein resides in the cell inner membrane. Functionally, produces ATP from ADP in the presence of a proton gradient across the membrane. The gamma chain is believed to be important in regulating ATPase activity and the flow of protons through the CF(0) complex. This chain is ATP synthase gamma chain, found in Ectopseudomonas mendocina (strain ymp) (Pseudomonas mendocina).